The sequence spans 347 residues: Protein RecA (347 aa).

66–73 contributes to the ATP binding site; the sequence is GPESSGKT.

This sequence belongs to the RecA family.

The protein resides in the cytoplasm. Its function is as follows. Can catalyze the hydrolysis of ATP in the presence of single-stranded DNA, the ATP-dependent uptake of single-stranded DNA by duplex DNA, and the ATP-dependent hybridization of homologous single-stranded DNAs. It interacts with LexA causing its activation and leading to its autocatalytic cleavage. The sequence is that of Protein RecA from Allochromatium vinosum (Chromatium vinosum).